Reading from the N-terminus, the 435-residue chain is MEAARSGIEDVTSPDRISQLPNDLLFRILSLIPVSDAMSTSLLSKRWKSVWKMLPTLVYNENSCSNIGSLGFDQFCGRSLQLHEAPLLKTLTLELRKQTDSLDSSIFPNIHSTLLEFSIKSTGYPVYYSTISFPNNLDVFQTLVVLKLQGNICLDVVDSPVCFQSLKSLYLTCVNFENEESFSKLLSACPVLEDLFLQRLCSVGRFLFSISVPSLQRLTYTKEQAYYSNDEAILEITAPSLKHLNIFDRVGVFSFIEDMPKLVEASVRVKLSKNEKLPKVLTSVEHLSLDLYPSMVFHLDDRFISKQLLHLKLDIYDNFQSNLLLSLLKDLPNLQSLKLNHSHPSYNVEDQPCSVSEPSSVPECLSFHLETFQWIGYAGTFEEIAAAVYVLKNARCLKNATISLYSRGTENGLMMIKELESMSKGSIMCQLLVKF.

Residues 14–62 form the F-box domain; that stretch reads PDRISQLPNDLLFRILSLIPVSDAMSTSLLSKRWKSVWKMLPTLVYNEN. LRR repeat units lie at residues 64-95, 146-173, 174-199, 222-248, 266-291, and 316-341; these read CSNI…TLEL, LKLQ…YLTC, VNFE…FLQR, KEQA…NIFD, SVRV…SLDL, and YDNF…KLNH. In terms of domain architecture, FBD spans 353 to 404; that stretch reads CSVSEPSSVPECLSFHLETFQWIGYAGTFEEIAAAVYVLKNARCLKNATISL.

The sequence is that of Putative F-box/FBD/LRR-repeat protein At5g56810 from Arabidopsis thaliana (Mouse-ear cress).